The primary structure comprises 165 residues: Phosphopantetheine adenylyltransferase (165 aa).

Thr10 provides a ligand contact to substrate. ATP contacts are provided by residues 10–11 (TF) and His18. Substrate contacts are provided by Lys42, Leu75, and Arg89. Residues 90-92 (GVR), Glu100, and 125-131 (YTYVAST) contribute to the ATP site.

This sequence belongs to the bacterial CoaD family. As to quaternary structure, homohexamer. Mg(2+) serves as cofactor.

It is found in the cytoplasm. It catalyses the reaction (R)-4'-phosphopantetheine + ATP + H(+) = 3'-dephospho-CoA + diphosphate. The protein operates within cofactor biosynthesis; coenzyme A biosynthesis; CoA from (R)-pantothenate: step 4/5. Its function is as follows. Reversibly transfers an adenylyl group from ATP to 4'-phosphopantetheine, yielding dephospho-CoA (dPCoA) and pyrophosphate. The protein is Phosphopantetheine adenylyltransferase of Chlorobaculum tepidum (strain ATCC 49652 / DSM 12025 / NBRC 103806 / TLS) (Chlorobium tepidum).